We begin with the raw amino-acid sequence, 345 residues long: tRNA N6-adenosine threonylcarbamoyltransferase (345 aa).

Fe cation is bound by residues His-117 and His-121. Substrate contacts are provided by residues 140 to 144 (LVSGG), Asp-173, Gly-186, and Asn-279. Position 307 (Asp-307) interacts with Fe cation.

It belongs to the KAE1 / TsaD family. It depends on Fe(2+) as a cofactor.

Its subcellular location is the cytoplasm. It catalyses the reaction L-threonylcarbamoyladenylate + adenosine(37) in tRNA = N(6)-L-threonylcarbamoyladenosine(37) in tRNA + AMP + H(+). Functionally, required for the formation of a threonylcarbamoyl group on adenosine at position 37 (t(6)A37) in tRNAs that read codons beginning with adenine. Is involved in the transfer of the threonylcarbamoyl moiety of threonylcarbamoyl-AMP (TC-AMP) to the N6 group of A37, together with TsaE and TsaB. TsaD likely plays a direct catalytic role in this reaction. The protein is tRNA N6-adenosine threonylcarbamoyltransferase of Verminephrobacter eiseniae (strain EF01-2).